The following is a 962-amino-acid chain: UvrABC system protein A (962 aa).

38-45 (GISGSGKS) provides a ligand contact to ATP. ABC transporter domains lie at 319-597 (WSKS…PDSL) and 617-944 (PSGR…RFLR). Residue 649-656 (GVSGSGKS) participates in ATP binding. The segment at 748-774 (CEACGGDGIIKIEMHFLADVYVPCEVC) adopts a C4-type zinc-finger fold.

Belongs to the ABC transporter superfamily. UvrA family. As to quaternary structure, forms a heterotetramer with UvrB during the search for lesions.

The protein localises to the cytoplasm. The UvrABC repair system catalyzes the recognition and processing of DNA lesions. UvrA is an ATPase and a DNA-binding protein. A damage recognition complex composed of 2 UvrA and 2 UvrB subunits scans DNA for abnormalities. When the presence of a lesion has been verified by UvrB, the UvrA molecules dissociate. This is UvrABC system protein A from Methanothermobacter thermautotrophicus (strain ATCC 29096 / DSM 1053 / JCM 10044 / NBRC 100330 / Delta H) (Methanobacterium thermoautotrophicum).